Here is a 287-residue protein sequence, read N- to C-terminus: Inorganic pyrophosphatase (287 aa).

R79 is a binding site for diphosphate. The Mg(2+) site is built by D116, D121, and D153.

This sequence belongs to the PPase family. It depends on Mg(2+) as a cofactor.

It localises to the cytoplasm. It carries out the reaction diphosphate + H2O = 2 phosphate + H(+). The chain is Inorganic pyrophosphatase (IPP1) from Debaryomyces hansenii (strain ATCC 36239 / CBS 767 / BCRC 21394 / JCM 1990 / NBRC 0083 / IGC 2968) (Yeast).